The sequence spans 344 residues: Protein L-Myc-1-B (344 aa).

Polar residues-rich tracts occupy residues 104 to 113 (GSPRVTNTQK) and 213 to 223 (NTMSPQHNFHS). 2 disordered regions span residues 104-162 (GSPR…EDEI) and 208-271 (LPPE…YLER). Residues 259–270 (DLAKRKNHNYLE) are compositionally biased toward basic and acidic residues. Residues 261–313 (AKRKNHNYLERKRRNDLRSRFLALREEVPSLSRSTKTPKVVVLSKATEFLKGL) enclose the bHLH domain. The leucine-zipper stretch occupies residues 313-341 (LVIQEQQLTAEKLKLWSRHQQLLRRISQL).

In terms of assembly, efficient DNA binding requires dimerization with another bHLH protein. Binds DNA as a heterodimer with MAX. High levels in oocytes, modest levels in kidney and low levels in spleen.

Its subcellular location is the nucleus. The sequence is that of Protein L-Myc-1-B (mycl1-b) from Xenopus laevis (African clawed frog).